The chain runs to 235 residues: Phosphoribosylaminoimidazole-succinocarboxamide synthase (235 aa).

Belongs to the SAICAR synthetase family.

It catalyses the reaction 5-amino-1-(5-phospho-D-ribosyl)imidazole-4-carboxylate + L-aspartate + ATP = (2S)-2-[5-amino-1-(5-phospho-beta-D-ribosyl)imidazole-4-carboxamido]succinate + ADP + phosphate + 2 H(+). It functions in the pathway purine metabolism; IMP biosynthesis via de novo pathway; 5-amino-1-(5-phospho-D-ribosyl)imidazole-4-carboxamide from 5-amino-1-(5-phospho-D-ribosyl)imidazole-4-carboxylate: step 1/2. The protein is Phosphoribosylaminoimidazole-succinocarboxamide synthase of Streptococcus agalactiae serotype Ia (strain ATCC 27591 / A909 / CDC SS700).